Reading from the N-terminus, the 212-residue chain is ER lumen protein-retaining receptor 1-B (212 aa).

Residues 1-4 (MNIF) lie on the Lumenal side of the membrane. The helical transmembrane segment at 5–24 (RFLGDISHLSAIIILLLKIW) threads the bilayer. The Cytoplasmic segment spans residues 25–32 (KSRSCAGI). A helical membrane pass occupies residues 33–52 (SGKSQLLFAIVFTTRYLDLF). The interaction with the K-D-E-L motif on target proteins stretch occupies residues 47-48 (RY). The Lumenal portion of the chain corresponds to 53–58 (TNFISF). The chain crosses the membrane as a helical span at residues 59–79 (YNTSMKVVYVASSYATVWMIY). The Cytoplasmic segment spans residues 80 to 92 (SKFKATYDGNHDT). A helical membrane pass occupies residues 93-110 (FRVEFLIVPTAILSFLVN). Topologically, residues 111-116 (HDFTPL) are lumenal. A helical transmembrane segment spans residues 117-135 (EILWTFSIYLESVAILPQL). Residues 136-149 (FMVSKTGEAETITS) are Cytoplasmic-facing. Residues 150-168 (HYLFALGIYRTLYLFNWIW) form a helical membrane-spanning segment. Residues 159–169 (RTLYLFNWIWR) form an interaction with the K-D-E-L motif on target proteins region. The Lumenal segment spans residues 169 to 178 (RYQFEEFFDL). The chain crosses the membrane as a helical span at residues 179-199 (IAIVAGLVQTVLYCDFFYLYI). The Cytoplasmic segment spans residues 200–212 (TKVLKGKKLSLPA). Residues 204–207 (KGKK) form an important for recycling of cargo proteins with the sequence motif K-D-E-L from the Golgi to the endoplasmic reticulum region.

This sequence belongs to the ERD2 family.

Its subcellular location is the golgi apparatus membrane. It is found in the cytoplasmic vesicle. The protein localises to the COPI-coated vesicle membrane. It localises to the endoplasmic reticulum membrane. The protein resides in the endoplasmic reticulum-Golgi intermediate compartment membrane. Receptor for the C-terminal sequence motif K-D-E-L that is present on endoplasmic reticulum resident proteins and that mediates their recycling from the Golgi back to the endoplasmic reticulum. The protein is ER lumen protein-retaining receptor 1-B (kdelr1-b) of Xenopus laevis (African clawed frog).